Here is a 378-residue protein sequence, read N- to C-terminus: MNDKKVIVLAAGGTGGHLFPAEALAVELRQRGYDVHLITDERARSFVRRFDEEHTHIVSSATFTRCHPFALIKTILSLLKGMGQSLRLFYKLRPVLVGGFGGYPSFPPLFIAVLMRRVTFIHEQNAVMGRANRVLAIFVRAIAGGLLSPKGAYAHKTLLTGNPVREAVLKAAEIPYHSPVGEEPFNFLVFGGSQGASFFSHIVPEAVALLDDQNRKRLRIVQQVRGDAAGLIKIYRDMGVQAEVAPFFDDMAERMAHAHFILSRAGASSVCEIAVIGRPALLIPYPYALDYDQAENAALLARVGGAQIISEKDLSAQKLAALLTQACCAPHLLEKQALAAKKVGQPYATRCLADMAEALIAGRLLSDIKEELFDENAT.

UDP-N-acetyl-alpha-D-glucosamine-binding positions include 14–16 (TGG), Asn125, Arg165, Ser193, and Gln293.

This sequence belongs to the glycosyltransferase 28 family. MurG subfamily.

The protein localises to the cell inner membrane. It carries out the reaction di-trans,octa-cis-undecaprenyl diphospho-N-acetyl-alpha-D-muramoyl-L-alanyl-D-glutamyl-meso-2,6-diaminopimeloyl-D-alanyl-D-alanine + UDP-N-acetyl-alpha-D-glucosamine = di-trans,octa-cis-undecaprenyl diphospho-[N-acetyl-alpha-D-glucosaminyl-(1-&gt;4)]-N-acetyl-alpha-D-muramoyl-L-alanyl-D-glutamyl-meso-2,6-diaminopimeloyl-D-alanyl-D-alanine + UDP + H(+). It functions in the pathway cell wall biogenesis; peptidoglycan biosynthesis. Functionally, cell wall formation. Catalyzes the transfer of a GlcNAc subunit on undecaprenyl-pyrophosphoryl-MurNAc-pentapeptide (lipid intermediate I) to form undecaprenyl-pyrophosphoryl-MurNAc-(pentapeptide)GlcNAc (lipid intermediate II). The protein is UDP-N-acetylglucosamine--N-acetylmuramyl-(pentapeptide) pyrophosphoryl-undecaprenol N-acetylglucosamine transferase of Bartonella tribocorum (strain CIP 105476 / IBS 506).